The primary structure comprises 475 residues: Aspartyl/glutamyl-tRNA(Asn/Gln) amidotransferase subunit B (475 aa).

It belongs to the GatB/GatE family. GatB subfamily. As to quaternary structure, heterotrimer of A, B and C subunits.

The catalysed reaction is L-glutamyl-tRNA(Gln) + L-glutamine + ATP + H2O = L-glutaminyl-tRNA(Gln) + L-glutamate + ADP + phosphate + H(+). It carries out the reaction L-aspartyl-tRNA(Asn) + L-glutamine + ATP + H2O = L-asparaginyl-tRNA(Asn) + L-glutamate + ADP + phosphate + 2 H(+). Functionally, allows the formation of correctly charged Asn-tRNA(Asn) or Gln-tRNA(Gln) through the transamidation of misacylated Asp-tRNA(Asn) or Glu-tRNA(Gln) in organisms which lack either or both of asparaginyl-tRNA or glutaminyl-tRNA synthetases. The reaction takes place in the presence of glutamine and ATP through an activated phospho-Asp-tRNA(Asn) or phospho-Glu-tRNA(Gln). The polypeptide is Aspartyl/glutamyl-tRNA(Asn/Gln) amidotransferase subunit B (Chlorobium chlorochromatii (strain CaD3)).